The sequence spans 208 residues: Probable GTP-binding protein EngB (208 aa).

The EngB-type G domain occupies 23 to 205; it reads LTSEMVVLGR…RQTLLKHLLT (183 aa). Residues 31 to 38, 57 to 61, 84 to 87, 154 to 157, and 182 to 184 contribute to the GTP site; these read GRSNVGKS, GKTRL, DLPG, TKFD, and FNA. Mg(2+) is bound by residues Ser38 and Thr59.

It belongs to the TRAFAC class TrmE-Era-EngA-EngB-Septin-like GTPase superfamily. EngB GTPase family. It depends on Mg(2+) as a cofactor.

In terms of biological role, necessary for normal cell division and for the maintenance of normal septation. This is Probable GTP-binding protein EngB from Helicobacter pylori (strain ATCC 700392 / 26695) (Campylobacter pylori).